The sequence spans 552 residues: ATP synthase subunit alpha (552 aa).

173–180 (GDRQTGKS) contributes to the ATP binding site. Residues 509-552 (KPQFSGGSKGSNVPKDVDAGATDADDISQEKITTRKGGATAARG) are disordered.

This sequence belongs to the ATPase alpha/beta chains family. F-type ATPases have 2 components, CF(1) - the catalytic core - and CF(0) - the membrane proton channel. CF(1) has five subunits: alpha(3), beta(3), gamma(1), delta(1), epsilon(1). CF(0) has three main subunits: a(1), b(2) and c(9-12). The alpha and beta chains form an alternating ring which encloses part of the gamma chain. CF(1) is attached to CF(0) by a central stalk formed by the gamma and epsilon chains, while a peripheral stalk is formed by the delta and b chains.

Its subcellular location is the cell membrane. The enzyme catalyses ATP + H2O + 4 H(+)(in) = ADP + phosphate + 5 H(+)(out). Its function is as follows. Produces ATP from ADP in the presence of a proton gradient across the membrane. The alpha chain is a regulatory subunit. This Kineococcus radiotolerans (strain ATCC BAA-149 / DSM 14245 / SRS30216) protein is ATP synthase subunit alpha.